The sequence spans 294 residues: Elongation factor Ts (294 aa).

Positions 79–82 (TDFV) are involved in Mg(2+) ion dislocation from EF-Tu.

The protein belongs to the EF-Ts family.

The protein resides in the cytoplasm. Its function is as follows. Associates with the EF-Tu.GDP complex and induces the exchange of GDP to GTP. It remains bound to the aminoacyl-tRNA.EF-Tu.GTP complex up to the GTP hydrolysis stage on the ribosome. This is Elongation factor Ts from Geobacillus sp. (strain WCH70).